The chain runs to 506 residues: MPSLLSTPKLAPVLARLRGLSGCMSCLQRRYSLQPAPVKKIPNRYLGQPSPVTHPHLLRPGEVTPGLSQVEYALRRHKLMALVHKEAQGHSGTDHTVVVLSNPTYYMSNDIPYTFHQDNNFLYLCGFQEPDSILVLQSFSGKQLPSHKAMLFVPRRDPGRELWDGPRSGTDGAIALTGVDEAYPLEEFQHLLPKLRAETNMVWYDWMKPSHAQLHSDYMQPLTEAKARSKNKVRSVQQLIQRLRLVKSPSEIKRMQIAGKLTSEAFIETMFASKAPIDEAFLYAKFEFECRARGADILAYPPVVAGGNRSNTLHYVKNNQLIKDGEMVLLDGGCESSCYVSDITRTWPVNGRFTAPQAELYEAVLEIQRACLTLCSPGTSLENIYSMMLTLIGQKLKDLGITKTSKESAFKAARKYCPHHVGHYLGMDVHDTPDMPRSLPLQPGMVITVEPGIYIPEDDRDAPEKFRGLGVRIEDDVVVTQDSPLILSADCPKEMNDIEQICSRTS.

The transit peptide at 1–31 (MPSLLSTPKLAPVLARLRGLSGCMSCLQRRY) directs the protein to the mitochondrion. The tract at residues 54–79 (HPHLLRPGEVTPGLSQVEYALRRHKL) is interaction with TNFRSF1B. Substrate contacts are provided by Y300, D331, D342, H423, H430, E450, and E474. Residues D331, D342, and H423 each coordinate Mn(2+). Positions 450 and 474 each coordinate Mn(2+).

Belongs to the peptidase M24B family. Homodimer. Interacts with TNFRSF1B/TNFR2 (activated) and TRAF2. Mn(2+) is required as a cofactor. As to expression, expressed in brain, kidney, heart, liver, skeletal muscle and testis.

It is found in the mitochondrion. Its subcellular location is the cytoplasm. It catalyses the reaction Release of any N-terminal amino acid, including proline, that is linked to proline, even from a dipeptide or tripeptide.. Its function is as follows. Catalyzes the removal of a penultimate prolyl residue from the N-termini of peptides, such as Leu-Pro-Ala. Also shows low activity towards peptides with Ala or Ser at the P1 position. Promotes TNFRSF1B-mediated phosphorylation of MAPK8/JNK1 and MAPK9/JNK2, suggesting a function as an adapter protein for TNFRSF1B; the effect is independent of XPNPEP3 peptidase activity. May inhibit apoptotic cell death induced via TNF-TNFRSF1B signaling. The polypeptide is Xaa-Pro aminopeptidase 3 (Xpnpep3) (Mus musculus (Mouse)).